Consider the following 145-residue polypeptide: D-aminoacyl-tRNA deacylase (145 aa).

The Gly-cisPro motif, important for rejection of L-amino acids motif lies at Gly-137 to Pro-138.

This sequence belongs to the DTD family. Homodimer.

It localises to the cytoplasm. It catalyses the reaction glycyl-tRNA(Ala) + H2O = tRNA(Ala) + glycine + H(+). The catalysed reaction is a D-aminoacyl-tRNA + H2O = a tRNA + a D-alpha-amino acid + H(+). Functionally, an aminoacyl-tRNA editing enzyme that deacylates mischarged D-aminoacyl-tRNAs. Also deacylates mischarged glycyl-tRNA(Ala), protecting cells against glycine mischarging by AlaRS. Acts via tRNA-based rather than protein-based catalysis; rejects L-amino acids rather than detecting D-amino acids in the active site. By recycling D-aminoacyl-tRNA to D-amino acids and free tRNA molecules, this enzyme counteracts the toxicity associated with the formation of D-aminoacyl-tRNA entities in vivo and helps enforce protein L-homochirality. This chain is D-aminoacyl-tRNA deacylase, found in Ruegeria pomeroyi (strain ATCC 700808 / DSM 15171 / DSS-3) (Silicibacter pomeroyi).